The primary structure comprises 211 residues: Large ribosomal subunit protein uL3 (211 aa).

Gln-150 bears the N5-methylglutamine mark.

It belongs to the universal ribosomal protein uL3 family. As to quaternary structure, part of the 50S ribosomal subunit. Forms a cluster with proteins L14 and L19. Post-translationally, methylated by PrmB.

One of the primary rRNA binding proteins, it binds directly near the 3'-end of the 23S rRNA, where it nucleates assembly of the 50S subunit. This Stutzerimonas stutzeri (strain A1501) (Pseudomonas stutzeri) protein is Large ribosomal subunit protein uL3.